Here is a 662-residue protein sequence, read N- to C-terminus: Transforming growth factor beta activator LRRC32 (662 aa).

A signal peptide spans 1 to 17 (MRPQILLLLALLTLGLA). The Extracellular portion of the chain corresponds to 18–625 (AQRQDKVPCK…EDCEKGGLKN (608 aa)). In terms of domain architecture, LRRNT spans 21–48 (QDKVPCKMVDKKVSCQGLGLLQVPSVLP). 10 LRR repeats span residues 50–73 (DTET…GFYT), 74–95 (ALRH…AFQA), 98–119 (HLEH…SAGG), 125–145 (RVTS…ERLL), 150–171 (SLHT…TFRD), 174–195 (VLEQ…AFEG), 198–219 (RLTH…SLQQ), 220–240 (LRVL…SQPQ), 244–265 (QLTW…AALP), and 266–286 (RLIY…PPQD). Asn203 carries an N-linked (GlcNAc...) asparagine glycan. Asn271 and Asn308 each carry an N-linked (GlcNAc...) asparagine glycan. 10 LRR repeats span residues 316–339 (QLLN…EHLT), 340–361 (SLCF…RSGS), 364–385 (CLML…ARAL), 387–408 (SLRT…TFAN), 411–432 (SLQR…DEPG), 444–465 (SLHS…AFLH), 467–488 (PLTE…ALGG), 492–513 (SLEV…LPCF), 515–536 (CLKR…TQAV), and 537–558 (SLEV…AMGG). An N-linked (GlcNAc...) asparagine glycan is attached at Asn345. The N-linked (GlcNAc...) asparagine glycan is linked to Asn545. The region spanning 571 to 620 (NPLSCCGNGWLAAQLHQGRVDVDATQDLICRFSSQEEVSLSHVRPEDCEK) is the LRRCT domain. Residues 626 to 646 (INLIIILTFILVSAILLTTLA) form a helical membrane-spanning segment. Topologically, residues 647–662 (TCCCVRRQKFNQQYKA) are cytoplasmic.

It belongs to the LRRC32/LRRC33 family. In terms of assembly, interacts with TGFB1; associates via disulfide bonds with the Latency-associated peptide chain (LAP) regulatory chain of TGFB1, leading to regulate activation of TGF-beta-1. Interacts with TGFB2. Interacts with TGFB3; associates via disulfide bonds with the Latency-associated peptide chain (LAP) regulatory chain of TGFB3, leading to regulate activation of TGF-beta-3. Interacts with LAPTM4B; decreases TGFB1 production in regulatory T-cells.

It localises to the cell membrane. The protein localises to the cell surface. Its function is as follows. Key regulator of transforming growth factor beta (TGFB1, TGFB2 and TGFB3) that controls TGF-beta activation by maintaining it in a latent state during storage in extracellular space. Associates specifically via disulfide bonds with the Latency-associated peptide (LAP), which is the regulatory chain of TGF-beta, and regulates integrin-dependent activation of TGF-beta. Able to outcompete LTBP1 for binding to LAP regulatory chain of TGF-beta. Controls activation of TGF-beta-1 (TGFB1) on the surface of activated regulatory T-cells (Tregs). Required for epithelial fusion during palate development by regulating activation of TGF-beta-3 (TGFB3). The sequence is that of Transforming growth factor beta activator LRRC32 from Pongo abelii (Sumatran orangutan).